A 334-amino-acid chain; its full sequence is Protein-methionine-sulfoxide reductase catalytic subunit MsrP (334 aa).

Residues M1–A44 constitute a signal peptide (tat-type signal). Mo-molybdopterin contacts are provided by residues N88, Y91 to E92, C146, T181, N233, R238, and G249 to K251.

The protein belongs to the MsrP family. As to quaternary structure, heterodimer of a catalytic subunit (MsrP) and a heme-binding subunit (MsrQ). Mo-molybdopterin serves as cofactor. In terms of processing, predicted to be exported by the Tat system. The position of the signal peptide cleavage has not been experimentally proven.

The protein resides in the periplasm. The catalysed reaction is L-methionyl-[protein] + a quinone + H2O = L-methionyl-(S)-S-oxide-[protein] + a quinol. The enzyme catalyses L-methionyl-[protein] + a quinone + H2O = L-methionyl-(R)-S-oxide-[protein] + a quinol. In terms of biological role, part of the MsrPQ system that repairs oxidized periplasmic proteins containing methionine sulfoxide residues (Met-O), using respiratory chain electrons. Thus protects these proteins from oxidative-stress damage caused by reactive species of oxygen and chlorine generated by the host defense mechanisms. MsrPQ is essential for the maintenance of envelope integrity under bleach stress, rescuing a wide series of structurally unrelated periplasmic proteins from methionine oxidation, including the primary periplasmic chaperone SurA and the lipoprotein Pal. The catalytic subunit MsrP is non-stereospecific, being able to reduce both (R-) and (S-) diastereoisomers of methionine sulfoxide. The protein is Protein-methionine-sulfoxide reductase catalytic subunit MsrP of Escherichia fergusonii (strain ATCC 35469 / DSM 13698 / CCUG 18766 / IAM 14443 / JCM 21226 / LMG 7866 / NBRC 102419 / NCTC 12128 / CDC 0568-73).